The chain runs to 227 residues: Pyridoxine/pyridoxamine 5'-phosphate oxidase (227 aa).

Residues 23–26 (RREY) and lysine 81 each bind substrate. Residues 76 to 81 (RIVLLK), 91 to 92 (YT), arginine 97, lysine 98, and glutamine 120 contribute to the FMN site. Substrate is bound by residues tyrosine 138, arginine 142, and serine 146. FMN is bound by residues 155-156 (QS) and tryptophan 200. 206–208 (RLH) serves as a coordination point for substrate. Arginine 210 contacts FMN.

This sequence belongs to the pyridoxamine 5'-phosphate oxidase family. In terms of assembly, homodimer. FMN serves as cofactor.

It carries out the reaction pyridoxamine 5'-phosphate + O2 + H2O = pyridoxal 5'-phosphate + H2O2 + NH4(+). The enzyme catalyses pyridoxine 5'-phosphate + O2 = pyridoxal 5'-phosphate + H2O2. Its pathway is cofactor metabolism; pyridoxal 5'-phosphate salvage; pyridoxal 5'-phosphate from pyridoxamine 5'-phosphate: step 1/1. It participates in cofactor metabolism; pyridoxal 5'-phosphate salvage; pyridoxal 5'-phosphate from pyridoxine 5'-phosphate: step 1/1. In terms of biological role, catalyzes the oxidation of either pyridoxine 5'-phosphate (PNP) or pyridoxamine 5'-phosphate (PMP) into pyridoxal 5'-phosphate (PLP). The polypeptide is Pyridoxine/pyridoxamine 5'-phosphate oxidase (Pectobacterium atrosepticum (strain SCRI 1043 / ATCC BAA-672) (Erwinia carotovora subsp. atroseptica)).